A 372-amino-acid polypeptide reads, in one-letter code: Secreted beta-glucosidase SIM1 (372 aa).

The N-terminal stretch at 1–15 (MKYLTLLTVLSTALA) is a signal peptide. Residues 51 to 85 (VTENASSGASSGETAETIQTRSSSDVSSSSDSNPV) are disordered. A compositionally biased stretch (low complexity) spans 52 to 85 (TENASSGASSGETAETIQTRSSSDVSSSSDSNPV). 2 N-linked (GlcNAc...) asparagine glycosylation sites follow: Asn54 and Asn351.

The protein belongs to the SUN family.

It localises to the secreted. It is found in the cell wall. Its function is as follows. Cell surface beta-glucosidase involved in cell wall maintenance and cytokinesis. Plays a role redundant to SUN41. This is Secreted beta-glucosidase SIM1 (SIM1) from Candida albicans (strain SC5314 / ATCC MYA-2876) (Yeast).